The chain runs to 445 residues: Probable D-serine dehydratase (445 aa).

K111 is subject to N6-(pyridoxal phosphate)lysine.

This sequence belongs to the serine/threonine dehydratase family. DsdA subfamily. Pyridoxal 5'-phosphate is required as a cofactor.

The catalysed reaction is D-serine = pyruvate + NH4(+). This Burkholderia pseudomallei (strain 668) protein is Probable D-serine dehydratase.